Reading from the N-terminus, the 208-residue chain is 2,3-bisphosphoglycerate-dependent phosphoglycerate mutase (208 aa).

Residues 9–16 (RHGQSEWN), 22–23 (TG), Arg61, 88–91 (ERDY), Lys99, 115–116 (RR), and 159–160 (GN) each bind substrate. Catalysis depends on His10, which acts as the Tele-phosphohistidine intermediate. The active-site Proton donor/acceptor is Glu88.

It belongs to the phosphoglycerate mutase family. BPG-dependent PGAM subfamily. Homodimer.

The catalysed reaction is (2R)-2-phosphoglycerate = (2R)-3-phosphoglycerate. Its pathway is carbohydrate degradation; glycolysis; pyruvate from D-glyceraldehyde 3-phosphate: step 3/5. Its function is as follows. Catalyzes the interconversion of 2-phosphoglycerate and 3-phosphoglycerate. This chain is 2,3-bisphosphoglycerate-dependent phosphoglycerate mutase, found in Methylobacterium sp. (strain 4-46).